The chain runs to 155 residues: Ribonuclease H (155 aa).

Residues 1-142 (MLKQVEIFTD…CDELARAAAM (142 aa)) enclose the RNase H type-1 domain. D10, E48, D70, and D134 together coordinate Mg(2+).

Belongs to the RNase H family. As to quaternary structure, monomer. The cofactor is Mg(2+).

It localises to the cytoplasm. The catalysed reaction is Endonucleolytic cleavage to 5'-phosphomonoester.. Its function is as follows. Endonuclease that specifically degrades the RNA of RNA-DNA hybrids. The protein is Ribonuclease H of Salmonella paratyphi A (strain AKU_12601).